We begin with the raw amino-acid sequence, 119 residues long: Protein ELF4-LIKE 2 (119 aa).

The interval 91 to 119 is disordered; sequence SVDASSEGESTGTLKSDGKANNQKRFRSG. Over residues 93–111 the composition is skewed to polar residues; that stretch reads DASSEGESTGTLKSDGKAN.

Belongs to the EARLY FLOWERING 4 family. As to quaternary structure, homodimer.

The protein localises to the nucleus. Its function is as follows. Component of the central CCA1/LHY-TOC1 feedback loop in the circadian clock that promotes clock accuracy and is required for sustained rhythms in the absence of daily light/dark cycles. This is Protein ELF4-LIKE 2 (EFL2) from Arabidopsis thaliana (Mouse-ear cress).